Reading from the N-terminus, the 199-residue chain is Small ribosomal subunit protein uS5 (199 aa).

Positions 1-28 (MARTPNTDRRQRGGDDQRNRSPRSDERD) are disordered. In terms of domain architecture, S5 DRBM spans 31 to 94 (FLDKLVHINR…DQAKRTMIKV (64 aa)).

Belongs to the universal ribosomal protein uS5 family. As to quaternary structure, part of the 30S ribosomal subunit. Contacts proteins S4 and S8.

Its function is as follows. With S4 and S12 plays an important role in translational accuracy. In terms of biological role, located at the back of the 30S subunit body where it stabilizes the conformation of the head with respect to the body. The sequence is that of Small ribosomal subunit protein uS5 from Rhodospirillum rubrum (strain ATCC 11170 / ATH 1.1.1 / DSM 467 / LMG 4362 / NCIMB 8255 / S1).